The chain runs to 101 residues: Protein Tat (101 aa).

The span at 1 to 12 (MEPVDPRLEPWK) shows a compositional bias: basic and acidic residues. The disordered stretch occupies residues 1 to 20 (MEPVDPRLEPWKHPGSQPKT). An interaction with human CREBBP region spans residues 1–24 (MEPVDPRLEPWKHPGSQPKTACTT). The transactivation stretch occupies residues 1-48 (MEPVDPRLEPWKHPGSQPKTACTTCYCKKCCFHCQVCFTKKALGISYG). 3 residues coordinate Zn(2+): C22, C25, and C27. A cysteine-rich region spans residues 22–37 (CTTCYCKKCCFHCQVC). K28 carries the N6-acetyllysine; by host PCAF modification. Residues C30, H33, C34, and C37 each coordinate Zn(2+). The interval 38 to 48 (FTKKALGISYG) is core. A disordered region spans residues 47 to 101 (YGRKKRRQRRRAPEDSQTHQVSLPKQPAPQFRGDPTGPKESKKKVERETETHPVD). Positions 49-57 (RKKRRQRRR) match the Nuclear localization signal, RNA-binding (TAR), and protein transduction motif. Residues 49–86 (RKKRRQRRRAPEDSQTHQVSLPKQPAPQFRGDPTGPKE) form an interaction with the host capping enzyme RNGTT region. Residues K50 and K51 each carry the N6-acetyllysine; by host EP300 and GCN5L2 modification. Asymmetric dimethylarginine; by host PRMT6 is present on residues R52 and R53. K71 is covalently cross-linked (Glycyl lysine isopeptide (Lys-Gly) (interchain with G-Cter in ubiquitin)). A Cell attachment site motif is present at residues 78 to 80 (RGD). The segment covering 83–101 (GPKESKKKVERETETHPVD) has biased composition (basic and acidic residues).

It belongs to the lentiviruses Tat family. As to quaternary structure, interacts with host CCNT1. Associates with the P-TEFb complex composed at least of Tat, P-TEFb (CDK9 and CCNT1), TAR RNA, RNA Pol II. Recruits the HATs CREBBP, TAF1/TFIID, EP300, PCAF and GCN5L2. Interacts with host KAT5/Tip60; this interaction targets the latter to degradation. Interacts with the host deacetylase SIRT1. Interacts with host capping enzyme RNGTT; this interaction stimulates RNGTT. Binds to host KDR, and to the host integrins ITGAV/ITGB3 and ITGA5/ITGB1. Interacts with host KPNB1/importin beta-1 without previous binding to KPNA1/importin alpha-1. Interacts with EIF2AK2. Interacts with host nucleosome assembly protein NAP1L1; this interaction may be required for the transport of Tat within the nucleus, since the two proteins interact at the nuclear rim. Interacts with host C1QBP/SF2P32; this interaction involves lysine-acetylated Tat. Interacts with the host chemokine receptors CCR2, CCR3 and CXCR4. Interacts with host DPP4/CD26; this interaction may trigger an anti-proliferative effect. Interacts with host LDLR. Interacts with the host extracellular matrix metalloproteinase MMP1. Interacts with host PRMT6; this interaction mediates Tat's methylation. Interacts with, and is ubiquitinated by MDM2/Hdm2. Interacts with host PSMC3 and HTATIP2. Interacts with STAB1; this interaction may overcome SATB1-mediated repression of IL2 and IL2RA (interleukin) in T cells by binding to the same domain than HDAC1. Interacts (when acetylated) with human CDK13, thereby increasing HIV-1 mRNA splicing and promoting the production of the doubly spliced HIV-1 protein Nef. Interacts with host TBP; this interaction modulates the activity of transcriptional pre-initiation complex. Interacts with host RELA. Interacts with host PLSCR1; this interaction negatively regulates Tat transactivation activity by altering its subcellular distribution. Post-translationally, asymmetrical arginine methylation by host PRMT6 seems to diminish the transactivation capacity of Tat and affects the interaction with host CCNT1. In terms of processing, acetylation by EP300, CREBBP, GCN5L2/GCN5 and PCAF regulates the transactivation activity of Tat. EP300-mediated acetylation of Lys-50 promotes dissociation of Tat from the TAR RNA through the competitive binding to PCAF's bromodomain. In addition, the non-acetylated Tat's N-terminus can also interact with PCAF. PCAF-mediated acetylation of Lys-28 enhances Tat's binding to CCNT1. Lys-50 is deacetylated by SIRT1. Polyubiquitination by host MDM2 does not target Tat to degradation, but activates its transactivation function and fosters interaction with CCNT1 and TAR RNA. Post-translationally, phosphorylated by EIF2AK2 on serine and threonine residues adjacent to the basic region important for TAR RNA binding and function. Phosphorylation of Tat by EIF2AK2 is dependent on the prior activation of EIF2AK2 by dsRNA.

It is found in the host nucleus. The protein localises to the host nucleolus. The protein resides in the host cytoplasm. It localises to the secreted. Transcriptional activator that increases RNA Pol II processivity, thereby increasing the level of full-length viral transcripts. Recognizes a hairpin structure at the 5'-LTR of the nascent viral mRNAs referred to as the transactivation responsive RNA element (TAR) and recruits the cyclin T1-CDK9 complex (P-TEFb complex) that will in turn hyperphosphorylate the RNA polymerase II to allow efficient elongation. The CDK9 component of P-TEFb and other Tat-activated kinases hyperphosphorylate the C-terminus of RNA Pol II that becomes stabilized and much more processive. Other factors such as HTATSF1/Tat-SF1, SUPT5H/SPT5, and HTATIP2 are also important for Tat's function. Besides its effect on RNA Pol II processivity, Tat induces chromatin remodeling of proviral genes by recruiting the histone acetyltransferases (HATs) CREBBP, EP300 and PCAF to the chromatin. This also contributes to the increase in proviral transcription rate, especially when the provirus integrates in transcriptionally silent region of the host genome. To ensure maximal activation of the LTR, Tat mediates nuclear translocation of NF-kappa-B by interacting with host RELA. Through its interaction with host TBP, Tat may also modulate transcription initiation. Tat can reactivate a latently infected cell by penetrating in it and transactivating its LTR promoter. In the cytoplasm, Tat is thought to act as a translational activator of HIV-1 mRNAs. Functionally, extracellular circulating Tat can be endocytosed by surrounding uninfected cells via the binding to several surface receptors such as CD26, CXCR4, heparan sulfate proteoglycans (HSPG) or LDLR. Neurons are rarely infected, but they internalize Tat via their LDLR. Through its interaction with nuclear HATs, Tat is potentially able to control the acetylation-dependent cellular gene expression. Modulates the expression of many cellular genes involved in cell survival, proliferation or in coding for cytokines or cytokine receptors. Tat plays a role in T-cell and neurons apoptosis. Tat induced neurotoxicity and apoptosis probably contribute to neuroAIDS. Circulating Tat also acts as a chemokine-like and/or growth factor-like molecule that binds to specific receptors on the surface of the cells, affecting many cellular pathways. In the vascular system, Tat binds to ITGAV/ITGB3 and ITGA5/ITGB1 integrins dimers at the surface of endothelial cells and competes with bFGF for heparin-binding sites, leading to an excess of soluble bFGF. This chain is Protein Tat, found in Human immunodeficiency virus type 1 group M subtype B (isolate MN) (HIV-1).